A 499-amino-acid chain; its full sequence is Aprataxin and PNK-like factor (499 aa).

The FHA-like domain occupies 1–108; sequence MPSDFFLQPL…RVFSAESEVE (108 aa). Phosphoserine; by ATM is present on S116. 3 disordered regions span residues 134–183, 197–292, and 305–358; these read VNLP…TQRK, DQSL…KTNK, and VSKH…DTAD. Residues 141–152 show a composition bias toward polar residues; it reads TGASQLQGSPEI. S149 carries the post-translational modification Phosphoserine. The KBM motif lies at 182–191; the sequence is RKRILPAWML. Polar residues predominate over residues 239–248; the sequence is PSGNSKSVSA. Residues 251 to 261 show a composition bias toward basic and acidic residues; the sequence is DPGKKCRKADQ. Low complexity predominate over residues 264-278; it reads PGVSSENVPESSSSN. The span at 281-292 shows a compositional bias: basic and acidic residues; the sequence is KDPDVDIVKTNK. Over residues 340 to 349 the composition is skewed to low complexity; it reads PESSSAPSSP. The a glycoprotein site is built by R371, Y376, Y381, and R382. Residues 372 to 393 form a PBZ-type 1 zinc finger; the sequence is TACMYGANCYRRNPLHFQHFSH. Residues 401 to 411 form a flexible linker region; it reads EVHGTDEGVIG. The PBZ-type 2 zinc-finger motif lies at 414-435; it reads PECPYGASCYRKNPQHKMEYRH. 3 residues coordinate a glycoprotein: Y418, Y423, and R424. Positions 440 to 499 are disordered; sequence ARVALDEDDDDVGQPSDDEDEEDYEPTDEDSDWHPGKDDEEQEDVDELLKEAKSSLHLKH. Residues 445-470 are compositionally biased toward acidic residues; that stretch reads DEDDDDVGQPSDDEDEEDYEPTDEDS. The NAP1L motif signature appears at 463–487; it reads YEPTDEDSDWHPGKDDEEQEDVDEL.

Belongs to the APLF family. Interacts with LIG4. Interacts with PARP1. Interacts with XRCC4. Interacts (via KBM motif) with XRCC5 and XRCC6; promoting recruitment to DNA damage sites. Interacts with XRCC1. Interacts (via C-terminal disordered region) with histones; interacts with histone H2A, H2B and H3-H4. Poly-ADP-ribosylated. In addition to binding non covalently poly-ADP-ribose via its PBZ-type zinc fingers, the protein is also covalently poly-ADP-ribosylated by PARP1. In terms of processing, phosphorylated in an ATM-dependent manner upon double-strand DNA break.

It is found in the nucleus. It localises to the chromosome. The protein resides in the cytoplasm. The protein localises to the cytosol. Functionally, histone chaperone involved in single-strand and double-strand DNA break repair. Recruited to sites of DNA damage through interaction with branched poly-ADP-ribose chains, a polymeric post-translational modification synthesized transiently at sites of chromosomal damage to accelerate DNA strand break repair reactions. Following recruitment to DNA damage sites, acts as a histone chaperone that mediates histone eviction during DNA repair and promotes recruitment of histone variant MACROH2A1. Also has a nuclease activity: displays apurinic-apyrimidinic (AP) endonuclease and 3'-5' exonuclease activities in vitro. Also able to introduce nicks at hydroxyuracil and other types of pyrimidine base damage. Together with PARP3, promotes the retention of the LIG4-XRCC4 complex on chromatin and accelerate DNA ligation during non-homologous end-joining (NHEJ). Also acts as a negative regulator of cell pluripotency by promoting histone exchange. Required for the embryo implantation during the epithelial to mesenchymal transition in females. This Mus musculus (Mouse) protein is Aprataxin and PNK-like factor (Aplf).